The following is a 159-amino-acid chain: Putative transmembrane protein ORF159 (159 aa).

The next 2 membrane-spanning stretches (helical) occupy residues 20-40 (LLLS…LSLF) and 59-79 (IIAV…GFCC). Positions 106–108 (RGD) match the Cell attachment site motif.

Its subcellular location is the host membrane. The sequence is that of Putative transmembrane protein ORF159 from Acidianus sp. F28 (AFV-2).